The sequence spans 630 residues: tRNA uridine 5-carboxymethylaminomethyl modification enzyme MnmG (630 aa).

13–18 (GGGHAG) serves as a coordination point for FAD. Residue 273 to 287 (GPRYCPSIEDKIHRF) coordinates NAD(+).

The protein belongs to the MnmG family. Homodimer. Heterotetramer of two MnmE and two MnmG subunits. FAD serves as cofactor.

Its subcellular location is the cytoplasm. Functionally, NAD-binding protein involved in the addition of a carboxymethylaminomethyl (cmnm) group at the wobble position (U34) of certain tRNAs, forming tRNA-cmnm(5)s(2)U34. In Pseudomonas entomophila (strain L48), this protein is tRNA uridine 5-carboxymethylaminomethyl modification enzyme MnmG.